A 148-amino-acid polypeptide reads, in one-letter code: 3-dehydroquinate dehydratase (148 aa).

The active-site Proton acceptor is the Tyr24. The substrate site is built by Asn75, His81, and Asp88. His101 (proton donor) is an active-site residue. Substrate-binding positions include 102–103 and Arg112; that span reads LS.

This sequence belongs to the type-II 3-dehydroquinase family. In terms of assembly, homododecamer.

The catalysed reaction is 3-dehydroquinate = 3-dehydroshikimate + H2O. It participates in metabolic intermediate biosynthesis; chorismate biosynthesis; chorismate from D-erythrose 4-phosphate and phosphoenolpyruvate: step 3/7. Functionally, catalyzes a trans-dehydration via an enolate intermediate. The polypeptide is 3-dehydroquinate dehydratase (Rhizobium meliloti (strain 1021) (Ensifer meliloti)).